Reading from the N-terminus, the 251-residue chain is 5'-nucleotidase SurE (251 aa).

Positions 8, 9, 39, and 91 each coordinate a divalent metal cation.

It belongs to the SurE nucleotidase family. A divalent metal cation serves as cofactor.

The protein localises to the cytoplasm. The enzyme catalyses a ribonucleoside 5'-phosphate + H2O = a ribonucleoside + phosphate. Its function is as follows. Nucleotidase that shows phosphatase activity on nucleoside 5'-monophosphates. This is 5'-nucleotidase SurE from Nitrosococcus oceani (strain ATCC 19707 / BCRC 17464 / JCM 30415 / NCIMB 11848 / C-107).